Consider the following 106-residue polypeptide: Integration host factor subunit alpha (106 aa).

The protein belongs to the bacterial histone-like protein family. As to quaternary structure, heterodimer of an alpha and a beta chain.

Functionally, this protein is one of the two subunits of integration host factor, a specific DNA-binding protein that functions in genetic recombination as well as in transcriptional and translational control. The protein is Integration host factor subunit alpha of Paramagnetospirillum magneticum (strain ATCC 700264 / AMB-1) (Magnetospirillum magneticum).